The chain runs to 428 residues: Adenosylmethionine-8-amino-7-oxononanoate aminotransferase (428 aa).

Position 52 (Trp-52) interacts with substrate. 112 to 113 is a binding site for pyridoxal 5'-phosphate; sequence GS. Substrate is bound at residue Tyr-144. Asp-245 contributes to the pyridoxal 5'-phosphate binding site. Residues Lys-274 and Gly-307 each contribute to the substrate site. Lys-274 bears the N6-(pyridoxal phosphate)lysine mark. Position 308–309 (308–309) interacts with pyridoxal 5'-phosphate; sequence PT. Arg-391 lines the substrate pocket.

Belongs to the class-III pyridoxal-phosphate-dependent aminotransferase family. BioA subfamily. In terms of assembly, homodimer. Requires pyridoxal 5'-phosphate as cofactor.

The protein resides in the cytoplasm. The enzyme catalyses (8S)-8-amino-7-oxononanoate + S-adenosyl-L-methionine = S-adenosyl-4-methylsulfanyl-2-oxobutanoate + (7R,8S)-7,8-diammoniononanoate. The protein operates within cofactor biosynthesis; biotin biosynthesis; 7,8-diaminononanoate from 8-amino-7-oxononanoate (SAM route): step 1/1. Catalyzes the transfer of the alpha-amino group from S-adenosyl-L-methionine (SAM) to 7-keto-8-aminopelargonic acid (KAPA) to form 7,8-diaminopelargonic acid (DAPA). It is the only aminotransferase known to utilize SAM as an amino donor. The chain is Adenosylmethionine-8-amino-7-oxononanoate aminotransferase from Buchnera aphidicola subsp. Acyrthosiphon pisum (strain APS) (Acyrthosiphon pisum symbiotic bacterium).